A 445-amino-acid polypeptide reads, in one-letter code: MEKIKVALVSLGCDKNRIDSELMLYKLNEEAELVKNPKEAQVIIVNTCGFIETAKEESINTILQMASYKKTHNCKVLVVTGCLTQRYKGELKELIPEMDIMLGVNDYDKLLESIKVFLKSGEKSFYHKYSDTKINEGNRILTTPTYTAYVRIAEGCNNFCTYCAIPRIRGKYRSRKKENILKEVENLAKQGVKEIILIAQDTTMYGIDIYGKKVLHELLRDISKVEGVKWIRLLYCYPEEITKELIEEIKNNDKVCKYLDLPIQQISNSVLKRMGRKTTKETIIDIIKKLRKEIEGITLRTSLIVGFPGETEGEFSELKEFVSDVKLDKLGVFKYSKEEGTSAALMEEQIDEEIKEKREEEIMILQQSISKDINKEKIGKIYEVIVEGTKEDMYYGRNYEMSPEIDGEIYFEKDENVKIGDIIKVKVTHSLEYDLIGVVYNELSK.

An MTTase N-terminal domain is found at 4-119; the sequence is IKVALVSLGC…LLESIKVFLK (116 aa). Cys-13, Cys-48, Cys-82, Cys-156, Cys-160, and Cys-163 together coordinate [4Fe-4S] cluster. One can recognise a Radical SAM core domain in the interval 142–372; the sequence is TTPTYTAYVR…MILQQSISKD (231 aa). The TRAM domain occupies 375-441; that stretch reads KEKIGKIYEV…EYDLIGVVYN (67 aa).

Belongs to the methylthiotransferase family. RimO subfamily. [4Fe-4S] cluster serves as cofactor.

The protein resides in the cytoplasm. The enzyme catalyses L-aspartate(89)-[ribosomal protein uS12]-hydrogen + (sulfur carrier)-SH + AH2 + 2 S-adenosyl-L-methionine = 3-methylsulfanyl-L-aspartate(89)-[ribosomal protein uS12]-hydrogen + (sulfur carrier)-H + 5'-deoxyadenosine + L-methionine + A + S-adenosyl-L-homocysteine + 2 H(+). In terms of biological role, catalyzes the methylthiolation of an aspartic acid residue of ribosomal protein uS12. In Clostridium botulinum (strain Langeland / NCTC 10281 / Type F), this protein is Ribosomal protein uS12 methylthiotransferase RimO.